Reading from the N-terminus, the 386-residue chain is DNA-directed RNA polymerase subunit Rpo1C (386 aa).

Belongs to the RNA polymerase beta' chain family. Part of the RNA polymerase complex.

The protein resides in the cytoplasm. The catalysed reaction is RNA(n) + a ribonucleoside 5'-triphosphate = RNA(n+1) + diphosphate. Its function is as follows. DNA-dependent RNA polymerase (RNAP) catalyzes the transcription of DNA into RNA using the four ribonucleoside triphosphates as substrates. Forms part of the jaw domain. In Methanococcus vannielii (strain ATCC 35089 / DSM 1224 / JCM 13029 / OCM 148 / SB), this protein is DNA-directed RNA polymerase subunit Rpo1C.